We begin with the raw amino-acid sequence, 322 residues long: GTP 3',8-cyclase (322 aa).

The region spanning 5 to 217 (SYGRVIDYLR…NIIAQKYSFK (213 aa)) is the Radical SAM core domain. Arg-14 contacts GTP. 2 residues coordinate [4Fe-4S] cluster: Cys-21 and Cys-25. Residue Tyr-27 coordinates S-adenosyl-L-methionine. A [4Fe-4S] cluster-binding site is contributed by Cys-28. Residue Arg-64 participates in GTP binding. Gly-68 lines the S-adenosyl-L-methionine pocket. Residue Thr-95 coordinates GTP. Position 119 (Ser-119) interacts with S-adenosyl-L-methionine. Residue Lys-155 participates in GTP binding. Met-189 is an S-adenosyl-L-methionine binding site. 2 residues coordinate [4Fe-4S] cluster: Cys-249 and Cys-252. 254 to 256 (RIR) contributes to the GTP binding site. Cys-266 is a binding site for [4Fe-4S] cluster.

The protein belongs to the radical SAM superfamily. MoaA family. Monomer and homodimer. [4Fe-4S] cluster serves as cofactor.

It catalyses the reaction GTP + AH2 + S-adenosyl-L-methionine = (8S)-3',8-cyclo-7,8-dihydroguanosine 5'-triphosphate + 5'-deoxyadenosine + L-methionine + A + H(+). Its pathway is cofactor biosynthesis; molybdopterin biosynthesis. In terms of biological role, catalyzes the cyclization of GTP to (8S)-3',8-cyclo-7,8-dihydroguanosine 5'-triphosphate. This is GTP 3',8-cyclase from Campylobacter lari (strain RM2100 / D67 / ATCC BAA-1060).